The sequence spans 381 residues: Succinyl-diaminopimelate desuccinylase (381 aa).

His-72 serves as a coordination point for Zn(2+). Residue Asp-74 is part of the active site. Asp-103 contacts Zn(2+). Glu-133 (proton acceptor) is an active-site residue. 3 residues coordinate Zn(2+): Glu-134, Glu-163, and His-348.

Belongs to the peptidase M20A family. DapE subfamily. In terms of assembly, homodimer. The cofactor is Zn(2+). Co(2+) is required as a cofactor.

The enzyme catalyses N-succinyl-(2S,6S)-2,6-diaminopimelate + H2O = (2S,6S)-2,6-diaminopimelate + succinate. It participates in amino-acid biosynthesis; L-lysine biosynthesis via DAP pathway; LL-2,6-diaminopimelate from (S)-tetrahydrodipicolinate (succinylase route): step 3/3. In terms of biological role, catalyzes the hydrolysis of N-succinyl-L,L-diaminopimelic acid (SDAP), forming succinate and LL-2,6-diaminopimelate (DAP), an intermediate involved in the bacterial biosynthesis of lysine and meso-diaminopimelic acid, an essential component of bacterial cell walls. In Anaplasma marginale (strain Florida), this protein is Succinyl-diaminopimelate desuccinylase.